The following is a 904-amino-acid chain: Alanine--tRNA ligase (904 aa).

Zn(2+) contacts are provided by His-584, His-588, Cys-687, and His-691.

Belongs to the class-II aminoacyl-tRNA synthetase family. The cofactor is Zn(2+).

The protein localises to the cytoplasm. The enzyme catalyses tRNA(Ala) + L-alanine + ATP = L-alanyl-tRNA(Ala) + AMP + diphosphate. Functionally, catalyzes the attachment of alanine to tRNA(Ala) in a two-step reaction: alanine is first activated by ATP to form Ala-AMP and then transferred to the acceptor end of tRNA(Ala). Also edits incorrectly charged Ser-tRNA(Ala) and Gly-tRNA(Ala) via its editing domain. This is Alanine--tRNA ligase from Mycobacterium tuberculosis (strain ATCC 25177 / H37Ra).